The following is a 955-amino-acid chain: Mediator of RNA polymerase II transcription subunit 16 (955 aa).

Positions 855–874 (ALPETNANANANQNGKSSTQ) are disordered. Over residues 857–873 (PETNANANANQNGKSST) the composition is skewed to polar residues.

The protein belongs to the Mediator complex subunit 16 family. Component of the Mediator complex.

Its subcellular location is the nucleus. Its function is as follows. Component of the Mediator complex, a coactivator involved in the regulated transcription of nearly all RNA polymerase II-dependent genes. Mediator functions as a bridge to convey information from gene-specific regulatory proteins to the basal RNA polymerase II transcription machinery. Mediator is recruited to promoters by direct interactions with regulatory proteins and serves as a scaffold for the assembly of a functional preinitiation complex with RNA polymerase II and the general transcription factors. The polypeptide is Mediator of RNA polymerase II transcription subunit 16 (sin4) (Aspergillus fumigatus (strain ATCC MYA-4609 / CBS 101355 / FGSC A1100 / Af293) (Neosartorya fumigata)).